The chain runs to 967 residues: RNA polymerase II C-terminal domain phosphatase-like 1 (967 aa).

A Nuclear localization signal (NLS) motif is present at residues 38–41; sequence RKKK. Positions 151-401 constitute an FCP1 homology domain; it reads LNLRCLGIVF…TPVLCVARNV (251 aa). Disordered stretches follow at residues 548–611 and 643–712; these read SEPS…VQSR and MEKH…RNSD. Over residues 590-603 the composition is skewed to pro residues; that stretch reads PSEPSFPQRPPVQA. Basic and acidic residues predominate over residues 665 to 684; sequence RMLHENRRPPKESLRRDEQL. DRBM domains are found at residues 724-792 and 855-925; these read TETS…NLAD and GSIT…SVRS. A disordered region spans residues 928 to 967; that stretch reads GQPLHKRQGSPRSFGGMSNKRLKPDFQRSLQRMPSSGRYS. Residues 945-967 are required for nuclear localization (NLS); the sequence is SNKRLKPDFQRSLQRMPSSGRYS. The Nuclear localization signal (NLS) signature appears at 947–951; sequence KRLKP. Over residues 955-967 the composition is skewed to polar residues; sequence RSLQRMPSSGRYS.

As to quaternary structure, interacts with FREE1, ANAC019, MYB3, MYB4 and MYB32. Binds to DMS3. Interacts with RCF3. Interacts with RS40 and RS41. Interacts with EIF4A3. Interacts with UPF3. Mg(2+) is required as a cofactor. It depends on Co(2+) as a cofactor. Mn(2+) serves as cofactor. Expressed at very low levels in roots, leaves, stems, flowers and siliques.

The protein resides in the nucleus. It is found in the nucleus speckle. It catalyses the reaction O-phospho-L-seryl-[protein] + H2O = L-seryl-[protein] + phosphate. The catalysed reaction is O-phospho-L-threonyl-[protein] + H2O = L-threonyl-[protein] + phosphate. Its function is as follows. Processively dephosphorylates 'Ser-5' but not 'Ser-2' of the heptad repeats YSPTSPS in the C-terminal domain of the largest RNA polymerase II subunit (RPB1). This promotes the activity of RNA polymerase II. Together with CPL2, required for male gametes fertility. Multifunctional regulator that modulates plant growth, stress, and phytohormones responses. Negative regulator of stress gene transcription involved in abscisic acid (ABA) mediated and jasmonic acid (JA) mediated signaling pathways, NaCl, osmotic stress, wounding, and cold resistance. Negatively regulates the expression of jasmonic acid (JA) biosynthetic genes in response to wounding. Forms a complex with RCF3 that modulates co-transcriptional processes such as mRNA capping and polyadenylation, and functions to repress stress-inducible gene expression. Dephosphorylates RCF3. Involved in the dephosphorylation of EIF4A3. This dephosphorylation retains EIF4A3 in the nucleus and limits its accumulation in the cytoplasm. Is essential for the degradation of the nonsense-mediated mRNA decay (NMD) transcripts. This Arabidopsis thaliana (Mouse-ear cress) protein is RNA polymerase II C-terminal domain phosphatase-like 1.